Consider the following 439-residue polypeptide: GTPase Der (439 aa).

EngA-type G domains follow at residues Pro-4 to Glu-168 and Ile-177 to Thr-352. GTP contacts are provided by residues Gly-10–Ser-17, Asp-57–Ile-61, Asn-120–Asp-123, Gly-183–Ser-190, Asp-230–Leu-234, and Asn-295–Asp-298. The KH-like domain occupies Lys-353–Lys-437.

This sequence belongs to the TRAFAC class TrmE-Era-EngA-EngB-Septin-like GTPase superfamily. EngA (Der) GTPase family. As to quaternary structure, associates with the 50S ribosomal subunit.

In terms of biological role, GTPase that plays an essential role in the late steps of ribosome biogenesis. This is GTPase Der from Clostridium botulinum (strain Kyoto / Type A2).